A 70-amino-acid chain; its full sequence is Large ribosomal subunit protein bL31 (70 aa).

K8 is modified (N6-acetyllysine). Zn(2+) is bound by residues C16, C18, C37, and C40.

Belongs to the bacterial ribosomal protein bL31 family. Type A subfamily. As to quaternary structure, part of the 50S ribosomal subunit. It depends on Zn(2+) as a cofactor.

Binds the 23S rRNA. The polypeptide is Large ribosomal subunit protein bL31 (Shigella flexneri).